The following is a 395-amino-acid chain: Protein PIN-LIKES 7 (395 aa).

Topologically, residues 1-8 are lumenal; that stretch reads MGFLELLE. Residues 9–29 form a helical membrane-spanning segment; it reads VASMPIVQVLLISVLGAFLAT. Over 30 to 45 the chain is Cytoplasmic; the sequence is DYCSLLSADTRRSVNK. A helical transmembrane segment spans residues 46–66; that stretch reads LVFVVFTPCIMFANLAETVTL. The Lumenal portion of the chain corresponds to 67 to 73; it reads QDIISWW. The helical transmembrane segment at 74-94 threads the bilayer; that stretch reads FMPINVGITFLVGGILGWLVV. Residues 95–106 are Cytoplasmic-facing; that stretch reads KLLNPKPQLHGL. Residues 107-127 traverse the membrane as a helical segment; the sequence is IIATCASGNMGNLMLILVPAI. The Lumenal segment spans residues 128–142; it reads CDEEGSPFGNRSVCR. A helical transmembrane segment spans residues 143-163; it reads SIGLSYASFSMALGGFYIWTY. At 164 to 232 the chain is on the cytoplasmic side; it reads SYQLVRSSAT…KDLLHQILEE (69 aa). The chain crosses the membrane as a helical span at residues 233-253; it reads LFAPPTIGAILGFVFGATNWL. The Lumenal portion of the chain corresponds to 254–272; that stretch reads RNLIIGENAPLRVIQDSVK. Residues 273–293 form a helical membrane-spanning segment; sequence LLGEGTIPCITLILGGNLIQG. Residues 294–302 are Cytoplasmic-facing; the sequence is LRSSAVKKS. Residues 303-323 traverse the membrane as a helical segment; it reads VIVGVIIVRYILLPVVGVGVV. Residues 324 to 340 are Lumenal-facing; that stretch reads QLAGNLGYLPPDPLFRY. A helical membrane pass occupies residues 341 to 361; it reads VLMLQFALPPAMNISTMAQLF. Over 362-369 the chain is Cytoplasmic; that stretch reads DVAQDECS. A helical transmembrane segment spans residues 370–390; that stretch reads VIFLWTYLVASLALTVWSTIF. The Lumenal portion of the chain corresponds to 391-395; it reads LSILS.

Belongs to the auxin efflux carrier (TC 2.A.69.2) family. As to expression, expressed in seedlings, rosette and cauline leaves, stems and flowers.

It localises to the endoplasmic reticulum membrane. Its function is as follows. Involved in cellular auxin homeostasis by regulating auxin metabolism. Regulates intracellular auxin accumulation at the endoplasmic reticulum and thus auxin availability for nuclear auxin signaling. The protein is Protein PIN-LIKES 7 of Arabidopsis thaliana (Mouse-ear cress).